The sequence spans 474 residues: Methylenetetrahydrofolate--tRNA-(uracil-5-)-methyltransferase TrmFO (474 aa).

Residue 15-20 coordinates FAD; sequence GAGLAG. The segment at 453-474 is disordered; that stretch reads PLLPTAPDTTGAAGEETTQAES.

Belongs to the MnmG family. TrmFO subfamily. The cofactor is FAD.

It is found in the cytoplasm. It catalyses the reaction uridine(54) in tRNA + (6R)-5,10-methylene-5,6,7,8-tetrahydrofolate + NADH + H(+) = 5-methyluridine(54) in tRNA + (6S)-5,6,7,8-tetrahydrofolate + NAD(+). It carries out the reaction uridine(54) in tRNA + (6R)-5,10-methylene-5,6,7,8-tetrahydrofolate + NADPH + H(+) = 5-methyluridine(54) in tRNA + (6S)-5,6,7,8-tetrahydrofolate + NADP(+). Its function is as follows. Catalyzes the folate-dependent formation of 5-methyl-uridine at position 54 (M-5-U54) in all tRNAs. The protein is Methylenetetrahydrofolate--tRNA-(uracil-5-)-methyltransferase TrmFO of Nitratidesulfovibrio vulgaris (strain ATCC 29579 / DSM 644 / CCUG 34227 / NCIMB 8303 / VKM B-1760 / Hildenborough) (Desulfovibrio vulgaris).